Here is a 357-residue protein sequence, read N- to C-terminus: AA9 family lytic polysaccharide monooxygenase B (357 aa).

The N-terminal stretch at 1–18 (MKFSSVLALAASAKLVAS) is a signal peptide. Cu(2+) contacts are provided by histidine 19 and histidine 101. The catalytic stretch occupies residues 19–234 (HATVFAVWIN…IPGPAVWDGA (216 aa)). A disulfide bond links cysteine 61 and cysteine 182. Residues histidine 168 and glutamine 177 each contribute to the O2 site. A Cu(2+)-binding site is contributed by tyrosine 179. A ser/Thr-rich linker region spans residues 235-318 (SSGSGSSGSG…SAAPTGGTGT (84 aa)). The tract at residues 292–317 (SVRPTTSAAPTTSAPTSSAAPTGGTG) is disordered. Residues 295 to 313 (PTTSAAPTTSAPTSSAAPT) are compositionally biased toward low complexity. The region spanning 319 to 355 (GSIQIYQQCGGMNYKGATGCASGLTCKQWNPYYHQCV) is the CBM1 domain.

It belongs to the polysaccharide monooxygenase AA9 family. It depends on Cu(2+) as a cofactor.

Its subcellular location is the secreted. It catalyses the reaction [(1-&gt;4)-beta-D-glucosyl]n+m + reduced acceptor + O2 = 4-dehydro-beta-D-glucosyl-[(1-&gt;4)-beta-D-glucosyl]n-1 + [(1-&gt;4)-beta-D-glucosyl]m + acceptor + H2O.. In terms of biological role, lytic polysaccharide monooxygenase (LPMO) that depolymerizes crystalline and amorphous polysaccharides via the oxidation of scissile alpha- or beta-(1-4)-glycosidic bonds, yielding C4 oxidation products. Catalysis by LPMOs requires the reduction of the active-site copper from Cu(II) to Cu(I) by a reducing agent and H(2)O(2) or O(2) as a cosubstrate. Active on carboxymethylcellulose (CMC), hydroxyethylcellulose (HEC) and beta-glucan. Also active on soluble cellohexaose, a property that is restricted to only a few characterized LPMOs. This chain is AA9 family lytic polysaccharide monooxygenase B, found in Emericella nidulans (strain FGSC A4 / ATCC 38163 / CBS 112.46 / NRRL 194 / M139) (Aspergillus nidulans).